The primary structure comprises 892 residues: Translation initiation factor IF-2 (892 aa).

Composition is skewed to basic and acidic residues over residues 93–159 and 166–216; these read VKRD…KDKV and DMTK…EENK. Positions 93 to 304 are disordered; it reads VKRDPQEAER…SSLQQGFQKP (212 aa). The segment covering 254 to 269 has biased composition (basic residues); the sequence is GRGRNAKAARPAKKGK. Positions 270 to 282 are enriched in basic and acidic residues; that stretch reads HAESKADREEARA. The 170-residue stretch at 391 to 560 folds into the tr-type G domain; it reads PRAPVVTIMG…LLQAEVLELK (170 aa). A G1 region spans residues 400–407; that stretch reads GHVDHGKT. 400-407 provides a ligand contact to GTP; it reads GHVDHGKT. Residues 425–429 form a G2 region; that stretch reads GITQH. Residues 446–449 are G3; that stretch reads DTPG. GTP contacts are provided by residues 446–450 and 500–503; these read DTPGH and NKID. The interval 500–503 is G4; it reads NKID. Residues 536 to 538 are G5; that stretch reads SAK.

The protein belongs to the TRAFAC class translation factor GTPase superfamily. Classic translation factor GTPase family. IF-2 subfamily.

It localises to the cytoplasm. One of the essential components for the initiation of protein synthesis. Protects formylmethionyl-tRNA from spontaneous hydrolysis and promotes its binding to the 30S ribosomal subunits. Also involved in the hydrolysis of GTP during the formation of the 70S ribosomal complex. The sequence is that of Translation initiation factor IF-2 from Salmonella gallinarum (strain 287/91 / NCTC 13346).